Consider the following 221-residue polypeptide: MEAGGVADSFLSSACVLFTLGMFSTGLSDLRHMQRTRSVDNIQFLPFLTTDVNNLGWLSYGVLKGDGTLIIVNTVGAVLQTLYILAYLHYSPQKHAVLLQTATLLAVLLLGYGYFWLLVPDLETRLQQLGLFCSVFTISMYLSPLADLAKIIQTKSTQRLSFSLTIATLLSSTSWSIYGFRLKDPYITVPNLPGILTGFIRLVLFYKYPPEQDTKYRLLQT.

7 helical membrane passes run 3 to 23 (AGGVADSFLSSACVLFTLGMF), 44 to 63 (FLPFLTTDVNNLGWLSYGVL), 68 to 88 (TLIIVNTVGAVLQTLYILAYL), 102 to 122 (ATLLAVLLLGYGYFWLLVPDL), 129 to 149 (LGLFCSVFTISMYLSPLADLA), 160 to 180 (LSFSLTIATLLSSTSWSIYGF), and 186 to 206 (YITVPNLPGILTGFIRLVLFY). Residues 10-94 (FLSSACVLFT…LAYLHYSPQK (85 aa)) enclose the MtN3/slv 1 domain. Residues 127-212 (QQLGLFCSVF…VLFYKYPPEQ (86 aa)) form the MtN3/slv 2 domain. Positions 149–221 (AKIIQTKSTQ…QDTKYRLLQT (73 aa)) are mediates interaction with TRPV2.

This sequence belongs to the SWEET sugar transporter family. In terms of assembly, interacts with TRPV2; the interaction probably occurs intracellularly and depends on TRPV2 N-glycosylation.

The protein localises to the golgi apparatus membrane. The protein resides in the cell membrane. Its function is as follows. Mediates sugar transport across membranes. May stimulate V(D)J recombination by the activation of RAG1. This is Sugar transporter SWEET1 (Slc50a1) from Rattus norvegicus (Rat).